A 238-amino-acid polypeptide reads, in one-letter code: MGPVSTSRRGLRLGISLILLQVGVVGACTVSVLQPGYLEVDYTSQTVTMECTFSTTGCPAVQPKSLWFRCGTHQPEALCLDGCRNEADKFTVKETLDQNRVSLTVNRLSPNDSAIYICGIAFPNEPVPTAKQTGDGTTLVVRERLFSREVHSLLIVLLALLAVYVTGVCVIFIVLFRSKSNTPRSRETKEDSKKKSARRIFQEIAQELYHKRYVETSHQPEQDGNYENRKALPSPGRP.

The signal sequence occupies residues 1-27 (MGPVSTSRRGLRLGISLILLQVGVVGA). Residues 28 to 153 (CTVSVLQPGY…RLFSREVHSL (126 aa)) lie on the Extracellular side of the membrane. Residues 30 to 134 (VSVLQPGYLE…EPVPTAKQTG (105 aa)) form the Ig-like C2-type domain. An intrachain disulfide couples Cys51 to Cys118. Residues 154–174 (LIVLLALLAVYVTGVCVIFIV) traverse the membrane as a helical segment. Over 175–238 (LFRSKSNTPR…RKALPSPGRP (64 aa)) the chain is Cytoplasmic. A compositionally biased stretch (basic and acidic residues) spans 215–230 (ETSHQPEQDGNYENRK). The segment at 215 to 238 (ETSHQPEQDGNYENRKALPSPGRP) is disordered.

Its subcellular location is the membrane. This is Immunoglobulin superfamily member 6 (Igsf6) from Rattus norvegicus (Rat).